The chain runs to 348 residues: VIP36-like protein (348 aa).

A signal peptide spans 1 to 38 (MAATLGPLGSWQQWRRCLLARDGSRMLLLLLLLGSGQG). Topologically, residues 39–313 (PQQVGAGQTF…APLPPLSGLA (275 aa)) are lumenal. The 226-residue stretch at 49 to 274 (EYLKREHSLS…DVISLKLFEL (226 aa)) folds into the L-type lectin-like domain. Residues Ser93 and Asp128 each contribute to the a carbohydrate site. Positions 159, 161, and 163 each coordinate Ca(2+). 161 to 163 (YPN) provides a ligand contact to a carbohydrate. Asn181 carries N-linked (GlcNAc...) asparagine glycosylation. His188 lines the a carbohydrate pocket. Position 191 (Asp191) interacts with Ca(2+). Cysteines 200 and 237 form a disulfide. 258 to 260 (GDL) is a binding site for a carbohydrate. A helical membrane pass occupies residues 314–334 (LFHIVFFSLVIFVFAIVIGII). At 335 to 348 (LYNKWQEQSRKRFY) the chain is on the cytoplasmic side. The Endoplasmic reticulum retention signal motif lies at 344 to 346 (RKR).

It localises to the endoplasmic reticulum membrane. The protein resides in the golgi apparatus membrane. In terms of biological role, may be involved in the regulation of export from the endoplasmic reticulum of a subset of glycoproteins. May function as a regulator of ERGIC-53. This is VIP36-like protein (LMAN2L) from Pongo abelii (Sumatran orangutan).